A 520-amino-acid chain; its full sequence is Probable glycine dehydrogenase (decarboxylating) subunit 2 (520 aa).

Positions 1 to 29 are disordered; it reads MWRQSRWNEPLITEMSRRGRRGALPPRPD. Lysine 279 is modified (N6-(pyridoxal phosphate)lysine).

The protein belongs to the GcvP family. C-terminal subunit subfamily. The glycine cleavage system is composed of four proteins: P, T, L and H. In this organism, the P 'protein' is a heterodimer of two subunits. It depends on pyridoxal 5'-phosphate as a cofactor.

The enzyme catalyses N(6)-[(R)-lipoyl]-L-lysyl-[glycine-cleavage complex H protein] + glycine + H(+) = N(6)-[(R)-S(8)-aminomethyldihydrolipoyl]-L-lysyl-[glycine-cleavage complex H protein] + CO2. Functionally, the glycine cleavage system catalyzes the degradation of glycine. The P protein binds the alpha-amino group of glycine through its pyridoxal phosphate cofactor; CO(2) is released and the remaining methylamine moiety is then transferred to the lipoamide cofactor of the H protein. The chain is Probable glycine dehydrogenase (decarboxylating) subunit 2 from Aeropyrum pernix (strain ATCC 700893 / DSM 11879 / JCM 9820 / NBRC 100138 / K1).